A 715-amino-acid chain; its full sequence is Dynein axonemal intermediate chain 7 (715 aa).

The interval 291–322 (AVSKDLQEENKQENESNSVHEEETKAEGQGDV) is disordered. The span at 295 to 318 (DLQEENKQENESNSVHEEETKAEG) shows a compositional bias: basic and acidic residues.

It belongs to the DNAI7 family. As to quaternary structure, part of the multisubunit axonemal dynein complex formed at least of two heavy chains and a number of intermediate and light chains. Associates with tubulin. Interacts with microtubule. In terms of processing, ubiquitinated. Ubiquitination leads to its degradation through the 26S proteasome. Ubiquitin-proteasome-mediated DNAI7 degradation occurs in mitosis.

The protein localises to the cell projection. Its subcellular location is the cilium. The protein resides in the cytoplasm. Its function is as follows. Via its association with the multisubunit axonemal dynein complex, is potentially involved in the regulation of cilia function. May act as a cell cycle regulator. The protein is Dynein axonemal intermediate chain 7 of Bos taurus (Bovine).